A 376-amino-acid chain; its full sequence is Gibberellic acid methyltransferase 1 (376 aa).

Residues tyrosine 22, cysteine 64, asparagine 69, aspartate 104, leucine 105, serine 136, and phenylalanine 137 each coordinate S-adenosyl-L-homocysteine. Residue tryptophan 158 coordinates gibberellin A9. Asparagine 175, valine 179, arginine 265, aspartate 266, phenylalanine 268, and asparagine 269 together coordinate Mg(2+).

The protein belongs to the methyltransferase superfamily. Type-7 methyltransferase family. SABATH subfamily. The cofactor is Mg(2+). As to expression, expressed in siliques, developing seeds, anthers and germinating seeds. Not detected in leaves, stems, flowers and roots.

It catalyses the reaction gibberellin A9 + S-adenosyl-L-methionine = O-methyl gibberellin A9 + S-adenosyl-L-homocysteine. Its activity is regulated as follows. Up-regulated by K(+) and NH(4+), down-regulated by Zn(2+), Cu(2+), Fe(2+) and Fe(3+). In terms of biological role, methylates the carboxyl group of several gibberellins (GAs). Substrate preference is GA9 &gt; GA20 &gt; GA3 &gt; GA4 &gt; GA34 &gt; GA51 &gt; GA1 &gt; GA19 &gt; GA12. No activity with diterpenes abietic acid and ent-kaurenoic acid. In Arabidopsis thaliana (Mouse-ear cress), this protein is Gibberellic acid methyltransferase 1 (GAMT1).